The following is a 104-amino-acid chain: Flagellar hook-basal body complex protein FliE (104 aa).

This sequence belongs to the FliE family.

The protein localises to the bacterial flagellum basal body. The sequence is that of Flagellar hook-basal body complex protein FliE from Escherichia coli (strain 55989 / EAEC).